A 115-amino-acid chain; its full sequence is Cell division topological specificity factor (115 aa).

Residues 89–115 (TGQIQLKEPKNQSEVDSPETEGKDQNS) are disordered.

It belongs to the MinE family.

Prevents the cell division inhibition by proteins MinC and MinD at internal division sites while permitting inhibition at polar sites. This ensures cell division at the proper site by restricting the formation of a division septum at the midpoint of the long axis of the cell. The protein is Cell division topological specificity factor of Prochlorococcus marinus (strain NATL2A).